An 85-amino-acid chain; its full sequence is Large ribosomal subunit protein bL27 (85 aa).

The segment at 1–22 is disordered; sequence MAHKKAGGSTKNGRDSESKRLG.

It belongs to the bacterial ribosomal protein bL27 family.

The protein is Large ribosomal subunit protein bL27 of Alteromonas mediterranea (strain DSM 17117 / CIP 110805 / LMG 28347 / Deep ecotype).